Consider the following 453-residue polypeptide: UDP-glucosyltransferase avaP (453 aa).

It belongs to the UDP-glycosyltransferase family.

Its pathway is secondary metabolite biosynthesis. UDP-glucosyltransferase; part of the cluster that mediates the biosynthesis of a highly modified cyclo-arginine-tryptophan dipeptide (cRW). The first step of the pathway is perfornmed by the arginine-containing cyclodipeptide synthase (RCPDS) avaA that acts as the scaffold-generating enzyme and is responsible for formation of the cyclo-Arg-Trp (cRW) diketopiperazine. AvaB then acts as a multifunctional flavoenzyme that is responsible for generating the cyclo-Arg-formylkynurenine DKP, which can be deformylated by avaC. AvaB then further catalyzes an additional N-oxidation followed by cyclization and dehydration. The next step is an N-acetylation of the guanidine group catalyzed by the arginine N-acetyltransferase avaD. The roles of the additional enzymes identified within the ava cluster still have to be determined. This Aspergillus versicolor protein is UDP-glucosyltransferase avaP.